Reading from the N-terminus, the 413-residue chain is Serine--tRNA ligase (413 aa).

221–223 (TAE) contributes to the L-serine binding site. ATP is bound at residue 252-254 (RRE). Residue E275 coordinates L-serine. 339–342 (EVSS) provides a ligand contact to ATP. S375 provides a ligand contact to L-serine.

It belongs to the class-II aminoacyl-tRNA synthetase family. Type-1 seryl-tRNA synthetase subfamily. Homodimer. The tRNA molecule binds across the dimer.

The protein resides in the cytoplasm. The catalysed reaction is tRNA(Ser) + L-serine + ATP = L-seryl-tRNA(Ser) + AMP + diphosphate + H(+). The enzyme catalyses tRNA(Sec) + L-serine + ATP = L-seryl-tRNA(Sec) + AMP + diphosphate + H(+). It participates in aminoacyl-tRNA biosynthesis; selenocysteinyl-tRNA(Sec) biosynthesis; L-seryl-tRNA(Sec) from L-serine and tRNA(Sec): step 1/1. Functionally, catalyzes the attachment of serine to tRNA(Ser). Is also able to aminoacylate tRNA(Sec) with serine, to form the misacylated tRNA L-seryl-tRNA(Sec), which will be further converted into selenocysteinyl-tRNA(Sec). This chain is Serine--tRNA ligase, found in Dehalococcoides mccartyi (strain ATCC BAA-2100 / JCM 16839 / KCTC 5957 / BAV1).